Consider the following 428-residue polypeptide: Enolase (428 aa).

Q163 lines the (2R)-2-phosphoglycerate pocket. The active-site Proton donor is the E205. Mg(2+) is bound by residues D242, E286, and D313. The (2R)-2-phosphoglycerate site is built by K338, R367, S368, and K389. K338 serves as the catalytic Proton acceptor.

It belongs to the enolase family. Mg(2+) serves as cofactor.

The protein resides in the cytoplasm. The protein localises to the secreted. It is found in the cell surface. The enzyme catalyses (2R)-2-phosphoglycerate = phosphoenolpyruvate + H2O. It participates in carbohydrate degradation; glycolysis; pyruvate from D-glyceraldehyde 3-phosphate: step 4/5. Catalyzes the reversible conversion of 2-phosphoglycerate (2-PG) into phosphoenolpyruvate (PEP). It is essential for the degradation of carbohydrates via glycolysis. This is Enolase from Syntrophus aciditrophicus (strain SB).